The primary structure comprises 332 residues: 5-dehydro-2-deoxygluconokinase (332 aa).

It belongs to the carbohydrate kinase PfkB family.

It carries out the reaction 5-dehydro-2-deoxy-D-gluconate + ATP = 6-phospho-5-dehydro-2-deoxy-D-gluconate + ADP + H(+). The protein operates within polyol metabolism; myo-inositol degradation into acetyl-CoA; acetyl-CoA from myo-inositol: step 5/7. Functionally, catalyzes the phosphorylation of 5-dehydro-2-deoxy-D-gluconate (2-deoxy-5-keto-D-gluconate or DKG) to 6-phospho-5-dehydro-2-deoxy-D-gluconate (DKGP). This chain is 5-dehydro-2-deoxygluconokinase, found in Bacillus thuringiensis subsp. konkukian (strain 97-27).